The chain runs to 39 residues: Protein YkiC (39 aa).

The chain crosses the membrane as a helical span at residues 13-35; that stretch reads LLSAKLCNCTQAIMTHIIASFLA.

Its subcellular location is the cell inner membrane. This chain is Protein YkiC, found in Escherichia coli (strain K12).